The sequence spans 564 residues: Hexose transporter HXT13 (564 aa).

The Cytoplasmic segment spans residues 1 to 52 (MSSAQSSIDSDGDVRDADIHVAPPVEKEWSDGFDDNEVINGDNVEPPKRGLI). Residues 53-73 (GYLVIYLLCYPISFGGFLPGW) form a helical membrane-spanning segment. Residues 74–109 (DSGITAGFINMDNFKMNFGSYKHSTGEYYLSNVRMG) lie on the Extracellular side of the membrane. A helical membrane pass occupies residues 110-130 (LLVAMFSIGCAIGGLIFARLA). The Cytoplasmic segment spans residues 131-136 (DTLGRR). A helical membrane pass occupies residues 137–157 (LAIVIVVLVYMVGAIIQISSN). The Extracellular portion of the chain corresponds to 158-167 (HKWYQYFVGK). Residues 168-188 (IIYGLGAGGCSVLCPMLLSEI) form a helical membrane-spanning segment. Topologically, residues 189 to 194 (APTDLR) are cytoplasmic. A helical transmembrane segment spans residues 195–215 (GGLVSLYQLNMTFGIFLGYCS). Over 216-229 (VYGTRKYDNTAQWR) the chain is Extracellular. The helical transmembrane segment at 230–250 (VPLGLCFLWALIIIIGMLLVP) threads the bilayer. The Cytoplasmic segment spans residues 251 to 333 (ESPRYLIECE…VQTFLQLTGE (83 aa)). A helical membrane pass occupies residues 334-350 (NYFFFYGTTIFKSVGLT). At 351–356 (DGFETS) the chain is on the extracellular side. Residues 357-374 (IVLGTVNFFSTIIAVMVV) form a helical membrane-spanning segment. Residues 375–381 (DKIGRRK) are Cytoplasmic-facing. Residues 382-402 (CLLFGAAGMMACMVIFASIGV) form a helical membrane-spanning segment. Residues 403 to 424 (KCLYPHGQDGPSSKGAGNAMIV) are Extracellular-facing. A helical transmembrane segment spans residues 425–445 (FTCFYIFCFATTWAPVAYIVV). Residues 446–462 (AESFPSKVKSRAMSIST) lie on the Cytoplasmic side of the membrane. The helical transmembrane segment at 463–483 (ACNWLWQFLIGFFTPFITGSI) threads the bilayer. Position 484 (His-484) is a topological domain, extracellular. Residues 485–505 (FYYGYVFVGCLVAMFLYVFFF) form a helical membrane-spanning segment. At 506–564 (LPETIGLSLEEIQLLYEEGIKPWKSASWVPPSRRGISSEESKTEKKDWKKFLKFSKNSD) the chain is on the cytoplasmic side. The segment at 530–551 (SASWVPPSRRGISSEESKTEKK) is disordered. Positions 541–551 (ISSEESKTEKK) are enriched in basic and acidic residues.

The protein belongs to the major facilitator superfamily. Sugar transporter (TC 2.A.1.1) family.

It localises to the membrane. Probable glucose transporter. The chain is Hexose transporter HXT13 (HXT13) from Saccharomyces cerevisiae (strain ATCC 204508 / S288c) (Baker's yeast).